A 291-amino-acid chain; its full sequence is uncharacterized protein (291 aa).

It belongs to the pseudouridine synthase RluA family.

The enzyme catalyses a uridine in RNA = a pseudouridine in RNA. This is an uncharacterized protein from Synechocystis sp. (strain ATCC 27184 / PCC 6803 / Kazusa).